The primary structure comprises 155 residues: NADH-ubiquinone oxidoreductase chain 6 (155 aa).

The next 4 membrane-spanning stretches (helical) occupy residues 1-21 (MLGS…PLAF), 42-62 (WISL…FIYV), 71-91 (FAVD…SFLV), and 121-141 (LTML…LLVI).

The protein belongs to the complex I subunit 6 family.

The protein localises to the mitochondrion membrane. The catalysed reaction is a ubiquinone + NADH + 5 H(+)(in) = a ubiquinol + NAD(+) + 4 H(+)(out). Functionally, core subunit of the mitochondrial membrane respiratory chain NADH dehydrogenase (Complex I) that is believed to belong to the minimal assembly required for catalysis. Complex I functions in the transfer of electrons from NADH to the respiratory chain. The immediate electron acceptor for the enzyme is believed to be ubiquinone. This chain is NADH-ubiquinone oxidoreductase chain 6 (ND6), found in Artemia franciscana (Brine shrimp).